The primary structure comprises 594 residues: Maternal effect protein oskar (594 aa).

A compositionally biased stretch (low complexity) spans 44–62 (QQQPKQQQQQQQHQSQHQH). The tract at residues 44–68 (QQQPKQQQQQQQHQSQHQHQQQKQK) is disordered. One can recognise an HTH OST-type domain in the interval 174–243 (EYPDIDTEIR…SGKRIFNIKP (70 aa)).

In terms of assembly, interacts with smaug (smg). Posterior pole of the oocyte.

Functionally, organizes the germ plasm and directs localization of the posterior determinant nanos. Oskar protein is required to keep oskar RNA and staufen protein at the posterior pole. This chain is Maternal effect protein oskar (osk), found in Drosophila virilis (Fruit fly).